The chain runs to 227 residues: Urease accessory protein UreF (227 aa).

This sequence belongs to the UreF family. UreD, UreF and UreG form a complex that acts as a GTP-hydrolysis-dependent molecular chaperone, activating the urease apoprotein by helping to assemble the nickel containing metallocenter of UreC. The UreE protein probably delivers the nickel.

The protein resides in the cytoplasm. Its function is as follows. Required for maturation of urease via the functional incorporation of the urease nickel metallocenter. This chain is Urease accessory protein UreF, found in Shewanella halifaxensis (strain HAW-EB4).